A 638-amino-acid polypeptide reads, in one-letter code: Chaperone protein DnaK (638 aa).

T198 is modified (phosphothreonine; by autocatalysis). The interval 602-638 (QAKSQAQGGEEAQAKDAGQSNDDVVDAEFEEVKDDKK) is disordered. Over residues 624–638 (DVVDAEFEEVKDDKK) the composition is skewed to acidic residues.

The protein belongs to the heat shock protein 70 family.

Its function is as follows. Acts as a chaperone. The sequence is that of Chaperone protein DnaK from Shewanella denitrificans (strain OS217 / ATCC BAA-1090 / DSM 15013).